The sequence spans 260 residues: Achaete-scute homolog 2 (260 aa).

Disordered regions lie at residues 85-126 (AGAC…RNER) and 191-239 (PATR…EDSS). Low complexity-rich tracts occupy residues 110–121 (ATEASSSSAAVA) and 200–218 (TQPS…STSP). Positions 118-170 (AAVARRNERERNRVKLVNLGFQALRQHVPHGGANKKLSKVETLRSAVEYIRAL) constitute a bHLH domain.

In terms of assembly, efficient DNA binding requires dimerization with another bHLH protein. Forms heterodimers with bHLH transcription factor TCF3. May not heterodimerise with bHLH protein HAND1. As to expression, expressed in Schwann cells in the peripheral nerve (at protein level). Also expressed by endothelial cells (at protein level). May be expressed in neuronal precursor cells.

It is found in the nucleus. It localises to the cytoplasm. Its function is as follows. Transcription factor. Binds to E-box motifs 5'-CANNTG-3' in the regulatory elements of target genes, probably as a heterodimer with another basic helix-loop-helix (bHLH) protein such as the transcription factor TCF3. May bind both open and closed chromatin, acting as a pioneer transcription factor to allow other factors to bind and activate lineage-specific genes. Required during post-implantation development for the generation of some differentiated trophoblast cell types. Transcriptional activity of ASCL2 may be antagonised in a subset of trophoblast cells by bHLH transcription factor HAND1, perhaps by competing for dimerization with other bHLH proteins. Involved in differentiation and function of follicular T-helper (Tfh) cells, thereby playing a role in germinal center responses; probably modulates expression of genes involved in Tfh cell function, such as BCL6. May also act as a suppressor of Th1-, Th2- and Th17-cell differentiation. Induces the formation of stem cells in intestinal crypts in vitro, synergistically activating transcription of target genes, such as SOX9, together with TCF4/beta-catenin. May form a bistable transcriptional switch, controlling expression of its own gene together with Wnt/R-spondin signaling, and thereby maintaining stem cell characteristics. Modulates expression of target genes, including perhaps down-regulating EGR1/Krox24 and chemokine CXCL10/Mob-1 and up-regulating CXCR4 and CDKN1C/p57kip2, in Schwann cells. May play a role in reducing proliferation of Schwann cells, perhaps acting via modulation of expression of CDKN1C. May be dispensable for blastocyst formation and later embryonic function. May be involved in the determination of neuronal precursors. This is Achaete-scute homolog 2 (Ascl2) from Rattus norvegicus (Rat).